The following is a 615-amino-acid chain: Alpha-terpinene synthase TPS33PK, chloroplastic (615 aa).

The N-terminal 33 residues, 1–33 (MFCRLGVHQFSPLSLILNTTKLARASTLSSACY), are a transit peptide targeting the chloroplast. Residues Glu334, Val371, Leu375, Leu513, and Ser516 each contribute to the (2E)-geranyl diphosphate site. Mg(2+) is bound by residues Val371 and Leu375. The short motif at 371 to 375 (VYGTL) is the DDXXD motif element. 3 residues coordinate Mg(2+): Ser516, Met520, and Asp524.

It belongs to the terpene synthase family. Tpsb subfamily. Requires Mg(2+) as cofactor. It depends on Mn(2+) as a cofactor.

It is found in the plastid. The protein resides in the chloroplast. It catalyses the reaction (2E)-geranyl diphosphate = alpha-terpinene + diphosphate. It carries out the reaction (2E)-geranyl diphosphate = gamma-terpinene + diphosphate. Its pathway is secondary metabolite biosynthesis; terpenoid biosynthesis. In terms of biological role, involved in monoterpene (C10) olefins biosynthesis, constituants of cannabinoids and terpenoids-rich resins. Catalyzes mainly the conversion of (2E)-geranyl diphosphate to alpha-terpinene and gamma-terpinene. The protein is Alpha-terpinene synthase TPS33PK, chloroplastic of Cannabis sativa (Hemp).